We begin with the raw amino-acid sequence, 132 residues long: Small ribosomal subunit protein uS8 (132 aa).

It belongs to the universal ribosomal protein uS8 family. As to quaternary structure, part of the 30S ribosomal subunit. Contacts proteins S5 and S12.

In terms of biological role, one of the primary rRNA binding proteins, it binds directly to 16S rRNA central domain where it helps coordinate assembly of the platform of the 30S subunit. The polypeptide is Small ribosomal subunit protein uS8 (Geotalea uraniireducens (strain Rf4) (Geobacter uraniireducens)).